Here is a 219-residue protein sequence, read N- to C-terminus: RING finger protein nenya (219 aa).

An RING-type zinc finger spans residues 6-48; it reads CNKCFRRRNVEPTLIFHMTQCQHVLCASCLSESSTDKKCPLCK. Residues 161-181 form a disordered region; the sequence is NQARGLRPRTPSVTTSDNTQS.

May interact with itself, with narya and vilya through its RING-type zinc finger.

Required for the formation of DNA double-strand breaks together with narya and vilya during the meiotic recombination process. Plays a redundant role with narya in chromosome segregation during female meiosis. This chain is RING finger protein nenya, found in Drosophila melanogaster (Fruit fly).